The primary structure comprises 116 residues: NADH-ubiquinone oxidoreductase chain 3 (116 aa).

Transmembrane regions (helical) follow at residues 3–23, 56–76, and 87–107; these read LITTIITITITLSAVLATISF, FFLIAILFLLFDLEIALLLPL, and LTLIWSTAVLALLTLGLIYEW.

Belongs to the complex I subunit 3 family.

Its subcellular location is the mitochondrion membrane. The catalysed reaction is a ubiquinone + NADH + 5 H(+)(in) = a ubiquinol + NAD(+) + 4 H(+)(out). Its function is as follows. Core subunit of the mitochondrial membrane respiratory chain NADH dehydrogenase (Complex I) that is believed to belong to the minimal assembly required for catalysis. Complex I functions in the transfer of electrons from NADH to the respiratory chain. The immediate electron acceptor for the enzyme is believed to be ubiquinone. The chain is NADH-ubiquinone oxidoreductase chain 3 (MT-ND3) from Oncorhynchus keta (Chum salmon).